The following is a 153-amino-acid chain: Peptidyl-prolyl cis-trans isomerase FKBP15-1 (153 aa).

A signal peptide spans 1–25 (MMSSASAMKAVGFLLLLTILTLAYA). Residues 52 to 140 (GDKIKVHYRG…IFDTELVAVN (89 aa)) enclose the PPIase FKBP-type domain. The Prevents secretion from ER motif lies at 150 to 153 (KNEL).

It belongs to the FKBP-type PPIase family.

Its subcellular location is the endoplasmic reticulum lumen. It carries out the reaction [protein]-peptidylproline (omega=180) = [protein]-peptidylproline (omega=0). Functionally, PPIases accelerate the folding of proteins. It catalyzes the cis-trans isomerization of proline imidic peptide bonds in oligopeptides. The sequence is that of Peptidyl-prolyl cis-trans isomerase FKBP15-1 (FKBP15-1) from Arabidopsis thaliana (Mouse-ear cress).